The sequence spans 138 residues: Transcriptional activator protein Pur-alpha (138 aa).

Ser70 carries the post-translational modification Phosphoserine.

The protein belongs to the PUR DNA-binding protein family. Homodimer, heterodimer with PURB and heterotrimer with PURB and YBX1/Y-box protein 1. Interacts with FMR1; this interaction occurs in association with polyribosome.

It localises to the nucleus. Its function is as follows. This is a probable transcription activator that specifically binds the purine-rich single strand of the PUR element located upstream of the c-Myc gene. May play a role in the initiation of DNA replication and in recombination. In Rattus norvegicus (Rat), this protein is Transcriptional activator protein Pur-alpha.